The chain runs to 111 residues: Macrodomain Ori protein (111 aa).

The protein belongs to the MaoP family.

Involved in the organization of the Ori region of the chromosome into a macrodomain (MD). It constrains DNA mobility in the Ori macrodomain and limits long-distance DNA interactions with other chromosomal regions. The protein is Macrodomain Ori protein of Haemophilus influenzae (strain ATCC 51907 / DSM 11121 / KW20 / Rd).